The primary structure comprises 211 residues: Small ribosomal subunit protein uS3 (211 aa).

In terms of domain architecture, KH type-2 spans Val-39–Lys-107.

This sequence belongs to the universal ribosomal protein uS3 family. In terms of assembly, part of the 30S ribosomal subunit. Forms a tight complex with proteins S10 and S14.

In terms of biological role, binds the lower part of the 30S subunit head. Binds mRNA in the 70S ribosome, positioning it for translation. This is Small ribosomal subunit protein uS3 from Neorickettsia sennetsu (strain ATCC VR-367 / Miyayama) (Ehrlichia sennetsu).